We begin with the raw amino-acid sequence, 440 residues long: Chromosome partition protein MukF (440 aa).

The interval 208 to 236 (LSETSGTLRELQDTLEAAGDKLQANLLRI) is leucine-zipper.

It belongs to the MukF family. Interacts, and probably forms a ternary complex, with MukE and MukB via its C-terminal region. The complex formation is stimulated by calcium or magnesium. It is required for an interaction between MukE and MukB.

Its subcellular location is the cytoplasm. It localises to the nucleoid. Its function is as follows. Involved in chromosome condensation, segregation and cell cycle progression. May participate in facilitating chromosome segregation by condensation DNA from both sides of a centrally located replisome during cell division. Not required for mini-F plasmid partitioning. Probably acts via its interaction with MukB and MukE. Overexpression results in anucleate cells. It has a calcium binding activity. This is Chromosome partition protein MukF from Escherichia coli (strain UTI89 / UPEC).